The following is a 1140-amino-acid chain: MLESEFQREHAFESATEQELTCPISDNLHESVEADDDSVQMLDNLTLNTNPAESCESEEIQTKALPSSSSGQDLVASDEDSEDVELGDTFYSCSELLQRNCCVLPYKAQKKTKENPFDFDVRTWSSPCDFPRFGEMILLSPVLNPMPFFSCCTKRAIFCSSPGSSHGGSTPRSPFSPSSPRERHNKGLADSRFQRPLPNSSALDPSSPGSMLHGGHKSHEAFQMKQGRFDLQAAKISELMKSNNLDNAPTQSLLSIVNGILDETIERKNGELPQRVACLLRKVVQEIERRISTQSEHLRTQNSVFKAREEKYQSRIKVLETLASGTSEENETEKSKLEEKKKDKEEDMVGIEKENGHYNLEISTLRRELETTKKAYEQQCLQMESKTKGATAGIEDRVKELEQMRKDASVARKALEERVRELEKMGKEADAVKMNLEEKVKELQKYKDETITVTTSIEGKNRELEQFKQETMTVTTSLEAQNRELEQAIKETMTVNTSLEAKNRELEQSKKETMTVNTSLKAKNRELEQNLVHWKSKAKEMEEKSELKNRSWSQKELSYRSFISFQCQALQELRFYSKSIKQEILKVQDKYTVEFSQLGKKLLELGDAAANYHEVLTENQKLFNELQELKGNIRVYCRVRPFLRGQGASKTVVEHIGDHGELVVLNPTKPGKDAHRKFRFNKVYSPASTQAEVFSDIKPLIRSVLDGYNVCIFAYGQTGSGKTYTMTGPDGASEEEWGVNYRALNDLFRISQSRKSNIAYEVGVQMVEIYNEQVRDLLSGILSTTQQNGLAVPDASMYPVTSTSDVLELMSIGLQNRVVSSTALNERSSRSHSIVTVHVRGKDLKTGSALYGNLHLVDLAGSERVDRSEVTGDRLKEAQHINKSLSALGDVIFSLASKSSHVPYRNSKLTQLLQSSLGGRAKTLMFVQLNPDITSYSESMSTLKFAERVSGVELGAAKSSKDGRDVRELMEQDTIARKDDEIERLHLLKDINYPQRLQKKSLGQSDDFNSEAGDSQLSIEDDSRFQHDYTRQSRHSVTDGEALASSTDAEYDDETEGSTDAPCAAEGRKPLKISDKPKPVTPRSNTTTSRPLDKLKQVTMRTTNIAKATSALLSPSSQGMKKTGSASNFLKSPKDSKRWS.

Residues 1-12 (MLESEFQREHAF) are compositionally biased toward basic and acidic residues. Disordered stretches follow at residues 1 to 37 (MLES…ADDD), 50 to 81 (NPAE…DEDS), 161 to 217 (SPGS…GGHK), and 323 to 347 (ASGT…KEED). Low complexity predominate over residues 161–179 (SPGSSHGGSTPRSPFSPSS). A compositionally biased stretch (basic and acidic residues) spans 180 to 193 (PRERHNKGLADSRF). The segment covering 197–209 (LPNSSALDPSSPG) has biased composition (polar residues). The stretch at 327-546 (SEENETEKSK…KAKEMEEKSE (220 aa)) forms a coiled coil. Basic and acidic residues predominate over residues 332–347 (TEKSKLEEKKKDKEED). Residues 632-952 (NIRVYCRVRP…LKFAERVSGV (321 aa)) enclose the Kinesin motor domain. 716–723 (GQTGSGKT) provides a ligand contact to ATP. A compositionally biased stretch (polar residues) spans 1002-1018 (LGQSDDFNSEAGDSQLS). Disordered regions lie at residues 1002-1021 (LGQS…SIED) and 1028-1140 (DYTR…KRWS). A compositionally biased stretch (basic and acidic residues) spans 1066 to 1078 (EGRKPLKISDKPK). Residues 1099–1130 (TMRTTNIAKATSALLSPSSQGMKKTGSASNFL) show a composition bias toward polar residues.

The protein belongs to the TRAFAC class myosin-kinesin ATPase superfamily. Kinesin family. KIN-14 subfamily.

In Arabidopsis thaliana (Mouse-ear cress), this protein is Kinesin-like protein KIN-14O.